The following is a 2185-amino-acid chain: Genome polyprotein (2185 aa).

G2 carries N-myristoyl glycine; by host lipidation. At 2-1495 (GAQVSTQKTG…HVSRAFICLQ (1494 aa)) the chain is on the cytoplasmic side. Positions 568–584 (FFQGPVEDAITAAIGRV) are amphipathic alpha-helix. Residues H872 and D890 each act as for protease 2A activity in the active site. Residues C907 and C909 each coordinate Zn(2+). The For protease 2A activity role is filled by C961. Residues C967 and H969 each coordinate Zn(2+). The membrane-binding stretch occupies residues 1101 to 1173 (NNGWLKKFTE…EQSAPSQSDQ (73 aa)). The segment at 1101–1239 (NNGWLKKFTE…SPGAGKSVAT (139 aa)) is oligomerization. The tract at residues 1122–1126 (AIKIQ) is RNA-binding. The 157-residue stretch at 1205–1361 (EKKMSNYIQF…SMYSQNGKIN (157 aa)) folds into the SF3 helicase domain. C1369, C1381, and C1386 together coordinate Zn(2+). The C4-type; degenerate zinc finger occupies 1369 to 1386 (CDEECCPVNFKKCCPLVC). Positions 1413 to 1420 (EYNHRHSV) are RNA-binding. Residues 1424-1429 (LEALFQ) form an oligomerization region. Residues 1496-1511 (AITTFVSVAGIIYIIY) lie within the membrane without spanning it. Residues 1512–2185 (KLFAGFQGAY…TIRRKWLDSF (674 aa)) lie on the Cytoplasmic side of the membrane. Y1521 is subject to O-(5'-phospho-RNA)-tyrosine. A Peptidase C3 domain is found at 1541 to 1719 (GPAFEFAVAM…FSAALLKHYF (179 aa)). Catalysis depends on for protease 3C activity residues H1580, E1611, and C1687. A RdRp catalytic domain is found at 1950–2066 (GHLIAFDYSG…SYPWPIDASL (117 aa)). Mg(2+)-binding residues include D1956 and D2052.

It belongs to the picornaviruses polyprotein family. Interacts with capsid protein VP1 and capsid protein VP3 to form heterotrimeric protomers. As to quaternary structure, interacts with capsid protein VP0, and capsid protein VP3 to form heterotrimeric protomers. Five protomers subsequently associate to form pentamers which serve as building blocks for the capsid. Interacts with capsid protein VP2, capsid protein VP3 and capsid protein VP4 following cleavage of capsid protein VP0. Interacts with host CD55. Interacts with host CXADR. In terms of assembly, interacts with capsid protein VP1 and capsid protein VP3 in the mature capsid. Interacts with capsid protein VP0 and capsid protein VP1 to form heterotrimeric protomers. Five protomers subsequently associate to form pentamers which serve as building blocks for the capsid. Interacts with capsid protein VP4 in the mature capsid. Interacts with protein 2C; this interaction may be important for virion morphogenesis. As to quaternary structure, interacts with capsid protein VP1 and capsid protein VP3. In terms of assembly, homodimer. Homohexamer; forms a hexameric ring structure with 6-fold symmetry characteristic of AAA+ ATPases. Interacts (via N-terminus) with host RTN3 (via reticulon domain); this interaction is important for viral replication. Interacts with capsid protein VP3; this interaction may be important for virion morphogenesis. As to quaternary structure, interacts with protein 3CD. In terms of assembly, homodimer. Interacts with host GBF1. Interacts (via GOLD domain) with host ACBD3 (via GOLD domain); this interaction allows the formation of a viral protein 3A/ACBD3 heterotetramer with a 2:2 stoichiometry, which will stimulate the recruitment of host PI4KB in order to synthesize PI4P at the viral RNA replication sites. Interacts with RNA-directed RNA polymerase. As to quaternary structure, interacts with host TICAM1 (via C-terminus). In terms of assembly, interacts with protein 3AB and with RNA-directed RNA polymerase. Interacts with Viral protein genome-linked and with protein 3CD. Mg(2+) serves as cofactor. In terms of processing, specific enzymatic cleavages in vivo by the viral proteases yield processing intermediates and the mature proteins. Myristoylation is required for the formation of pentamers during virus assembly. Further assembly of 12 pentamers and a molecule of genomic RNA generates the provirion. Post-translationally, during virion maturation, immature virions are rendered infectious following cleavage of VP0 into VP4 and VP2. This maturation seems to be an autocatalytic event triggered by the presence of RNA in the capsid and it is followed by a conformational change infectious virion. In terms of processing, myristoylation is required during RNA encapsidation and formation of the mature virus particle. VPg is uridylylated by the polymerase into VPg-pUpU. This acts as a nucleotide-peptide primer for the genomic RNA replication.

It is found in the virion. Its subcellular location is the host cytoplasm. The protein localises to the host cytoplasmic vesicle membrane. It localises to the host nucleus. The catalysed reaction is a ribonucleoside 5'-triphosphate + H2O = a ribonucleoside 5'-diphosphate + phosphate + H(+). It catalyses the reaction Selective cleavage of Tyr-|-Gly bond in the picornavirus polyprotein.. It carries out the reaction RNA(n) + a ribonucleoside 5'-triphosphate = RNA(n+1) + diphosphate. The enzyme catalyses Selective cleavage of Gln-|-Gly bond in the poliovirus polyprotein. In other picornavirus reactions Glu may be substituted for Gln, and Ser or Thr for Gly.. Replication or transcription is subject to high level of random mutations by the nucleotide analog ribavirin. In terms of biological role, forms an icosahedral capsid of pseudo T=3 symmetry with capsid proteins VP2 and VP3. The capsid is 300 Angstroms in diameter, composed of 60 copies of each capsid protein and enclosing the viral positive strand RNA genome. Capsid protein VP1 mainly forms the vertices of the capsid. Capsid protein VP1 interacts with host cell receptors CD55 and CXADR to provide virion attachment to target host cells. This attachment induces virion internalization. Tyrosine kinases are probably involved in the entry process. After binding to its receptor, the capsid undergoes conformational changes. Capsid protein VP1 N-terminus (that contains an amphipathic alpha-helix) and capsid protein VP4 are externalized. Together, they shape a pore in the host membrane through which viral genome is translocated to host cell cytoplasm. Functionally, forms an icosahedral capsid of pseudo T=3 symmetry with capsid proteins VP2 and VP3. The capsid is 300 Angstroms in diameter, composed of 60 copies of each capsid protein and enclosing the viral positive strand RNA genome. Its function is as follows. Lies on the inner surface of the capsid shell. After binding to the host receptor, the capsid undergoes conformational changes. Capsid protein VP4 is released, Capsid protein VP1 N-terminus is externalized, and together, they shape a pore in the host membrane through which the viral genome is translocated into the host cell cytoplasm. Component of immature procapsids, which is cleaved into capsid proteins VP4 and VP2 after maturation. Allows the capsid to remain inactive before the maturation step. In terms of biological role, cysteine protease that cleaves viral polyprotein and specific host proteins. It is responsible for the autocatalytic cleavage between the P1 and P2 regions, which is the first cleavage occurring in the polyprotein. Also cleaves the host translation initiation factor EIF4G1, in order to shut down the capped cellular mRNA translation. Inhibits the host nucleus-cytoplasm protein and RNA trafficking by cleaving host members of the nuclear pores. Counteracts stress granule formation probably by antagonizing its assembly or promoting its dissassembly. Cleaves and inhibits host IFIH1/MDA5, thereby inhibiting the type-I IFN production and the establishment of the antiviral state. Cleaves and inhibits host MAVS, thereby inhibiting the type-I IFN production and the establishment of the antiviral state. Functionally, plays an essential role in the virus replication cycle by acting as a viroporin. Creates a pore in the host endoplasmic reticulum and as a consequence releases Ca2+ in the cytoplasm of infected cell. In turn, high levels of cytoplasmic calcium may trigger membrane trafficking and transport of viral ER-associated proteins to viroplasms, sites of viral genome replication. Its function is as follows. Induces and associates with structural rearrangements of intracellular membranes. Displays RNA-binding, nucleotide binding and NTPase activities. May play a role in virion morphogenesis and viral RNA encapsidation by interacting with the capsid protein VP3. Localizes the viral replication complex to the surface of membranous vesicles. Together with protein 3CD binds the Cis-Active RNA Element (CRE) which is involved in RNA synthesis initiation. Acts as a cofactor to stimulate the activity of 3D polymerase, maybe through a nucleid acid chaperone activity. In terms of biological role, localizes the viral replication complex to the surface of membranous vesicles. It inhibits host cell endoplasmic reticulum-to-Golgi apparatus transport and causes the disassembly of the Golgi complex, possibly through GBF1 interaction. This would result in depletion of MHC, trail receptors and IFN receptors at the host cell surface. Plays an essential role in viral RNA replication by recruiting ACBD3 and PI4KB at the viral replication sites, thereby allowing the formation of the rearranged membranous structures where viral replication takes place. Functionally, acts as a primer for viral RNA replication and remains covalently bound to viral genomic RNA. VPg is uridylylated prior to priming replication into VPg-pUpU. The oriI viral genomic sequence may act as a template for this. The VPg-pUpU is then used as primer on the genomic RNA poly(A) by the RNA-dependent RNA polymerase to replicate the viral genome. During genome replication, the VPg-RNA linkage is removed by the host TDP2, thereby accelerating replication. During the late stage of the replication cycle, host TDP2 is excluded from sites of viral RNA synthesis and encapsidation, allowing for the generation of progeny virions. Its function is as follows. Involved in the viral replication complex and viral polypeptide maturation. It exhibits protease activity with a specificity and catalytic efficiency that is different from protease 3C. Protein 3CD lacks polymerase activity. Protein 3CD binds to the 5'UTR of the viral genome. Major viral protease that mediates proteolytic processing of the polyprotein. Cleaves host EIF5B, contributing to host translation shutoff. Also cleaves host PABPC1, contributing to host translation shutoff. Cleaves and inhibits host RIGI, thereby inhibiting the type-I IFN production and the establishment of the antiviral state. Cleaves and inhibits host MAVS, thereby inhibiting the type-I IFN production and the establishment of the antiviral state. Cleaves and inhibits host TICAM1/TRIF, thereby inhibiting the type-I IFN production. Cleaves host NLRP1, triggers host N-glycine-mediated degradation of the autoinhibitory NLRP1 N-terminal fragment. In terms of biological role, replicates the viral genomic RNA on the surface of intracellular membranes. May form linear arrays of subunits that propagate along a strong head-to-tail interaction called interface-I. Covalently attaches UMP to a tyrosine of VPg, which is used to prime RNA synthesis. The positive stranded RNA genome is first replicated at virus induced membranous vesicles, creating a dsRNA genomic replication form. This dsRNA is then used as template to synthesize positive stranded RNA genomes. ss(+)RNA genomes are either translated, replicated or encapsidated. This Homo sapiens (Human) protein is Genome polyprotein.